The following is a 283-amino-acid chain: Thymidylate synthase (283 aa).

Arg-22 contacts dUMP. Cys-160 (nucleophile) is an active-site residue. DUMP-binding positions include 180–183 (RSAD), Asn-191, and 221–223 (HIY). Asp-183 is a (6R)-5,10-methylene-5,6,7,8-tetrahydrofolate binding site. Ser-282 provides a ligand contact to (6R)-5,10-methylene-5,6,7,8-tetrahydrofolate.

It belongs to the thymidylate synthase family. Bacterial-type ThyA subfamily. Homodimer.

The protein localises to the cytoplasm. The catalysed reaction is dUMP + (6R)-5,10-methylene-5,6,7,8-tetrahydrofolate = 7,8-dihydrofolate + dTMP. It participates in pyrimidine metabolism; dTTP biosynthesis. Catalyzes the reductive methylation of 2'-deoxyuridine-5'-monophosphate (dUMP) to 2'-deoxythymidine-5'-monophosphate (dTMP) while utilizing 5,10-methylenetetrahydrofolate (mTHF) as the methyl donor and reductant in the reaction, yielding dihydrofolate (DHF) as a by-product. This enzymatic reaction provides an intracellular de novo source of dTMP, an essential precursor for DNA biosynthesis. This is Thymidylate synthase from Glaesserella parasuis serovar 5 (strain SH0165) (Haemophilus parasuis).